Reading from the N-terminus, the 104-residue chain is Glutaredoxin 1 (104 aa).

The region spanning 1–96 is the Glutaredoxin domain; the sequence is MNKSILHTII…KLLETQPKNK (96 aa). Cysteines 17 and 20 form a disulfide.

It belongs to the glutaredoxin family. In terms of assembly, monomer.

It localises to the cytoplasm. Its function is as follows. Has a glutathione-disulfide oxidoreductase activity in the presence of NADPH and glutathione reductase. Reduces low molecular weight disulfides and proteins. The polypeptide is Glutaredoxin 1 (grxC1) (Rickettsia typhi (strain ATCC VR-144 / Wilmington)).